The sequence spans 6359 residues: Bacitracin synthase 3 (6359 aa).

The tract at residues 461–1034 (LHELFEEQAM…IKGLGEYIRS (574 aa)) is domain 1 (isoleucine-activating). Over residues 941 to 953 (VDRKALPEPDRTA) the composition is skewed to basic and acidic residues. The tract at residues 941 to 962 (VDRKALPEPDRTAGAENEYEAP) is disordered. Carrier domains lie at 961 to 1036 (APRN…RSTK), 1993 to 2067 (APRN…KKQS), 3497 to 3572 (APRN…ESMK), 4539 to 4613 (PPRN…KAES), and 6047 to 6122 (PPRH…KHAQ). Residues Ser-996, Ser-2028, and Ser-3532 each carry the O-(pantetheine 4'-phosphoryl)serine modification. The interval 1517–2064 (FEDQTLTYRQ…RIKDLAKYVK (548 aa)) is domain 2 (D-phenylalanine-activating). Residues 2999–3570 (NKTIHQLFEE…IKDIGDFIES (572 aa)) form a domain 3 (histidine-activating) region. The segment at 4047-4612 (EQTAVVYADE…KSLSRYVKAE (566 aa)) is domain 4 (D-aspartic acid-activating). The tract at residues 4521 to 4544 (IDTAALPEPQPGKETEYEPPRNET) is disordered. The span at 4531–4544 (PGKETEYEPPRNET) shows a compositional bias: basic and acidic residues. An O-(pantetheine 4'-phosphoryl)serine mark is found at Ser-4574 and Ser-6082. Residues 5549 to 6129 (IHRLFEEQAE…HAQDLLKDYT (581 aa)) form a domain 5 (asparagine-activating) region.

Belongs to the ATP-dependent AMP-binding enzyme family. In terms of assembly, large multienzyme complex of BA1, BA2 and BA3. The cofactor is pantetheine 4'-phosphate.

It catalyses the reaction L-aspartate = D-aspartate. It carries out the reaction L-phenylalanine + ATP + H2O = D-phenylalanine + AMP + diphosphate + H(+). Its pathway is antibiotic biosynthesis; bacitracin biosynthesis. Induces peptide synthesis, activates and incorporates five amino acids, forms a thiazoline ring between the first two amino acids and incorporates a D-glutamine in the fourth position. In Bacillus licheniformis, this protein is Bacitracin synthase 3 (bacC).